We begin with the raw amino-acid sequence, 245 residues long: Probable phosphatase YcdX (245 aa).

9 residues coordinate Zn(2+): H7, H9, H15, H40, E73, H101, H131, D192, and H194.

It belongs to the PHP family. As to quaternary structure, homotrimer. It depends on Zn(2+) as a cofactor.

In Escherichia coli O127:H6 (strain E2348/69 / EPEC), this protein is Probable phosphatase YcdX.